Consider the following 365-residue polypeptide: HLA class I histocompatibility antigen, A alpha chain (365 aa).

Residues Met1–Ala24 form the signal peptide. Residues Val3 to Leu11 form a VL9 epitope region. Residues Gly25–Ala114 form an alpha-1 region. The Extracellular segment spans residues Gly25–Ile308. Position 31 (Tyr31) interacts with a peptide antigen. Sulfotyrosine is present on Tyr83. Positions 97 and 108 each coordinate a peptide antigen. N-linked (GlcNAc...) asparagine glycosylation is present at Asn110. Residues Gly115–Thr206 form an alpha-2 region. Cys125 and Cys188 form a disulfide bridge. Residues Asp140, Thr167, Lys170, Tyr183, and Tyr195 each contribute to the a peptide antigen site. The tract at residues Asp207–Trp298 is alpha-3. One can recognise an Ig-like C1-type domain in the interval Pro209–Thr295. An intrachain disulfide couples Cys227 to Cys283. The interval Glu299–Ile308 is connecting peptide. A helical transmembrane segment spans residues Val309–Trp332. Residues Arg333 to Val365 are Cytoplasmic-facing. A disordered region spans residues Arg339 to Val365. Residue Ser343 is modified to Phosphoserine. At Tyr344 the chain carries Phosphotyrosine. A compositionally biased stretch (low complexity) spans Gln346–Ser359. Residues Ser349, Ser350, Ser352, Ser356, and Ser359 each carry the phosphoserine modification.

The protein belongs to the MHC class I family. In terms of assembly, heterotrimer that consists of an alpha chain HLA-A, a beta chain B2M and a peptide (peptide-HLA-A-B2M). Early in biogenesis, HLA-A-B2M dimer interacts with the components of the peptide-loading complex composed of TAPBP, TAP1-TAP2, TAPBPL, PDIA3/ERP57 and CALR. Interacts with TAP1-TAP2 transporter via TAPBP; this interaction is obligatory for the loading of peptide epitopes delivered to the ER by TAP1-TAP2 transporter. Interacts with TAPBPL; TAPBPL binds peptide-free HLA-A-B2M complexes or those loaded with low affinity peptides, likely facilitating peptide exchange for higher affinity peptides. Only optimally assembled peptide-HLA-B2M trimer translocates to the surface of antigen-presenting cells, where it interacts with TCR and CD8 coreceptor on the surface of T cells. HLA-A (via polymorphic alpha-1 and alpha-2 domains) interacts with antigen-specific TCR (via CDR3 domains). One HLA-A molecule (mainly via nonpolymorphic alpha-3 domain) interacts with one CD8A homodimer (via CDR-like loop); this interaction ensures peptide-HLA-A-B2M recognition by CD8-positive T cells only. Alleles A*23:01; A*24:02 and A*32:01 interact (via Bw4 motif) with KIR3DL1 on NK cells; this interaction is direct. (Microbial infection) Interacts with HHV-8 MIR1 protein. As to quaternary structure, (Microbial infection) Interacts with HTLV-1 accessory protein p12I. In terms of processing, (Microbial infection) Polyubiquitinated in a post ER compartment by interaction with human herpesvirus 8 MIR1 protein. This targets the protein for rapid degradation via the ubiquitin system. Post-translationally, N-linked glycosylation at Asn-110. In terms of tissue distribution, ubiquitous.

The protein resides in the cell membrane. It is found in the endoplasmic reticulum membrane. Antigen-presenting major histocompatibility complex class I (MHCI) molecule. In complex with B2M/beta 2 microglobulin displays primarily viral and tumor-derived peptides on antigen-presenting cells for recognition by alpha-beta T cell receptor (TCR) on HLA-A-restricted CD8-positive T cells, guiding antigen-specific T cell immune response to eliminate infected or transformed cells. May also present self-peptides derived from the signal sequence of secreted or membrane proteins, although T cells specific for these peptides are usually inactivated to prevent autoreactivity. Both the peptide and the MHC molecule are recognized by TCR, the peptide is responsible for the fine specificity of antigen recognition and MHC residues account for the MHC restriction of T cells. Typically presents intracellular peptide antigens of 8 to 13 amino acids that arise from cytosolic proteolysis via IFNG-induced immunoproteasome or via endopeptidase IDE/insulin-degrading enzyme. Can bind different peptides containing allele-specific binding motifs, which are mainly defined by anchor residues at position 2 and 9. In terms of biological role, allele A*01:01: Presents a restricted peptide repertoire including viral epitopes derived from IAV NP/nucleoprotein (CTELKLSDY), IAV PB1/polymerase basic protein 1 (VSDGGPNLY), HAdV-11 capsid L3/hexon protein (LTDLGQNLLY), SARS-CoV-2 3a/ORF3a (FTSDYYQLY) as well as tumor peptide antigens including MAGE1 (EADPTGHSY), MAGEA3 (EVDPIGHLY) and WT1 (TSEKRPFMCAY), all having in common a canonical motif with a negatively charged Asp or Glu residue at position 3 and a Tyr anchor residue at the C-terminus. A number of HLA-A*01:01-restricted peptides carry a post-translational modification with oxidation and N-terminal acetylation being the most frequent. Fails to present highly immunogenic peptides from the EBV latent antigens. Its function is as follows. Allele A*02:01: A major allele in human populations, presents immunodominant viral epitopes derived from IAV M/matrix protein 1 (GILGFVFTL), HIV-1 env (TLTSCNTSV), HIV-1 gag-pol (ILKEPVHGV), HTLV-1 Tax (LLFGYPVYV), HBV C/core antigen (FLPSDFFPS), HCMV UL83/pp65 (NLVPMVATV) as well as tumor peptide antigens including MAGEA4 (GVYDGREHTV), WT1 (RMFPNAPYL) and CTAG1A/NY-ESO-1 (SLLMWITQC), all having in common hydrophobic amino acids at position 2 and at the C-terminal anchors. Functionally, allele A*03:01: Presents viral epitopes derived from IAV NP (ILRGSVAHK), HIV-1 nef (QVPLRPMTYK), HIV-1 gag-pol (AIFQSSMTK), SARS-CoV-2 N/nucleoprotein (KTFPPTEPK) as well as tumor peptide antigens including PMEL (LIYRRRLMK), NODAL (HAYIQSLLK), TRP-2 (RMYNMVPFF), all having in common hydrophobic amino acids at position 2 and Lys or Arg anchor residues at the C-terminus. May also display spliced peptides resulting from the ligation of two separate proteasomal cleavage products that are not contiguous in the parental protein. Allele A*11:01: Presents several immunodominant epitopes derived from HIV-1 gag-pol and HHV-4 EBNA4, containing the peptide motif with Val, Ile, Thr, Leu, Tyr or Phe at position 2 and Lys anchor residue at the C-terminus. Important in the control of HIV-1, EBV and HBV infections. Presents an immunodominant epitope derived from SARS-CoV-2 N/nucleoprotein (KTFPPTEPK). In terms of biological role, allele A*23:01: Interacts with natural killer (NK) cell receptor KIR3DL1 and may contribute to functional maturation of NK cells and self-nonself discrimination during innate immune response. Its function is as follows. Allele A*24:02: Presents viral epitopes derived from HIV-1 nef (RYPLTFGWCF), EBV lytic- and latent-cycle antigens BRLF1 (TYPVLEEMF), BMLF1 (DYNFVKQLF) and LMP2 (IYVLVMLVL), SARS-CoV nucleocapsid/N (QFKDNVILL), as well as tumor peptide antigens including PRAME (LYVDSLFFL), all sharing a common signature motif, namely an aromatic residue Tyr or Phe at position 2 and a nonhydrophobic anchor residue Phe, Leu or Iso at the C-terminus. Interacts with natural killer (NK) cell receptor KIR3DL1 and may contribute to functional maturation of NK cells and self-nonself discrimination during innate immune response. Functionally, allele A*26:01: Presents several epitopes derived from HIV-1 gag-pol (EVIPMFSAL, ETKLGKAGY) and env (LVSDGGPNLY), carrying as anchor residues preferentially Glu at position 1, Val or Thr at position 2 and Tyr at the C-terminus. Allele A*29:02: Presents peptides having a common motif, namely a Glu residue at position 2 and Tyr or Leu anchor residues at the C-terminus. In terms of biological role, allele A*32:01: Interacts with natural killer (NK) cell receptor KIR3DL1 and may contribute to functional maturation of NK cells and self-nonself discrimination during innate immune response. Its function is as follows. Allele A*68:01: Presents viral epitopes derived from IAV NP (KTGGPIYKR) and HIV-1 tat (ITKGLGISYGR), having a common signature motif namely, Val or Thr at position 2 and positively charged residues Arg or Lys at the C-terminal anchor. Functionally, allele A*74:01: Presents immunodominant HIV-1 epitopes derived from gag-pol (GQMVHQAISPR, QIYPGIKVR) and rev (RQIHSISER), carrying an aliphatic residue at position 2 and Arg anchor residue at the C-terminus. May contribute to viral load control in chronic HIV-1 infection. This Homo sapiens (Human) protein is HLA class I histocompatibility antigen, A alpha chain.